A 506-amino-acid chain; its full sequence is ATP synthase subunit alpha (506 aa).

ATP is bound at residue 170–177 (GDRQTGKT).

The protein belongs to the ATPase alpha/beta chains family. In terms of assembly, F-type ATPases have 2 components, CF(1) - the catalytic core - and CF(0) - the membrane proton channel. CF(1) has five subunits: alpha(3), beta(3), gamma(1), delta(1), epsilon(1). CF(0) has four main subunits: a(1), b(1), b'(1) and c(9-12).

It is found in the cellular thylakoid membrane. It carries out the reaction ATP + H2O + 4 H(+)(in) = ADP + phosphate + 5 H(+)(out). In terms of biological role, produces ATP from ADP in the presence of a proton gradient across the membrane. The alpha chain is a regulatory subunit. The sequence is that of ATP synthase subunit alpha from Synechococcus sp. (strain JA-2-3B'a(2-13)) (Cyanobacteria bacterium Yellowstone B-Prime).